The primary structure comprises 326 residues: 3-isopropylmalate dehydrogenase (326 aa).

The substrate site is built by Arg81, Arg91, Arg112, and Asp198. Asp198, Asp222, and Asp226 together coordinate Mg(2+). Residue Gly255 to Asn267 participates in NAD(+) binding.

The protein belongs to the isocitrate and isopropylmalate dehydrogenases family. As to quaternary structure, homotetramer. Mg(2+) serves as cofactor. The cofactor is Mn(2+).

It localises to the cytoplasm. The enzyme catalyses (2R,3S)-3-isopropylmalate + NAD(+) = 4-methyl-2-oxopentanoate + CO2 + NADH. The protein operates within amino-acid biosynthesis; L-leucine biosynthesis; L-leucine from 3-methyl-2-oxobutanoate: step 3/4. Its function is as follows. Catalyzes the oxidation of 3-carboxy-2-hydroxy-4-methylpentanoate (3-isopropylmalate) to 3-carboxy-4-methyl-2-oxopentanoate. The product decarboxylates to 4-methyl-2 oxopentanoate. The chain is 3-isopropylmalate dehydrogenase (leuB) from Archaeoglobus fulgidus (strain ATCC 49558 / DSM 4304 / JCM 9628 / NBRC 100126 / VC-16).